A 1463-amino-acid polypeptide reads, in one-letter code: Probable oxidoreductase PXDNL (1463 aa).

Positions 1 to 23 are cleaved as a signal peptide; the sequence is MEPRLFCWTTLFLLAGWCLPGLP. The 27-residue stretch at 24 to 50 folds into the LRRNT domain; the sequence is CPSRCLCFKSTVRCMHLMLDHIPQVPQ. LRR repeat units follow at residues 51–72, 75–96, 99–120, 123–144, and 147–168; these read QTTVLDLRFNRIREIPGSAFKK, NLNTLLLNNNHIRKISRNAFEG, NLLYLYLYKNEIHALDKQTFKG, SLEHLYIHFNQLEMLQPETFGD, and RLERLFLHNNKLSKIPAGSFSN. The LRRCT domain occupies 180–233; it reads NALVCDCDLMWLGELLQGFAQHGHTQAAATCEYPRRLHGRAVASVTVEEFNCQS. Ig-like C2-type domains follow at residues 234–322, 330–414, 419–504, and 507–596; these read PRIT…AMLR, PSFV…ANII, PQFT…VQLT, and PKAL…MFLT. Intrachain disulfides connect Cys-255–Cys-305, Cys-351–Cys-398, Cys-440–Cys-488, Cys-532–Cys-580, and Cys-718–Cys-734. Residue Asn-387 is glycosylated (N-linked (GlcNAc...) asparagine). His-812 functions as the Proton acceptor in the catalytic mechanism. Asp-813 provides a ligand contact to Ca(2+). Disulfide bonds link Cys-832/Cys-842 and Cys-836/Cys-859. Ca(2+)-binding residues include Thr-891, Tyr-893, Asp-895, and Ser-897. A disulfide bond links Cys-944 and Cys-953. Position 1057 (His-1057) interacts with heme b. 2 disulfides stabilise this stretch: Cys-1160/Cys-1217 and Cys-1258/Cys-1284. The VWFC domain occupies 1393 to 1451; it reads AGCTDVRGVPRKAEERWMKEDCTHCICESGQVTCVVEICPPAPCPSPELVKGTCCPVCR.

Belongs to the peroxidase family. XPO subfamily. As to quaternary structure, interacts with PXDN; this interaction inhibits the peroxidase activity of PXDN. Heme b serves as cofactor. Phosphorylation by SRC on tyrosine residues is required for targeting to polysomes. In terms of tissue distribution, the 57 kDa isoform PMR1 is the only form detected at protein levels in human cell lines. Expressed in heart.

It is found in the secreted. Its subcellular location is the endoplasmic reticulum. The protein localises to the cell membrane. The protein resides in the cytoplasm. Functionally, probable oxidoreductase. Lacks peroxidase activity. Inhibits the peroxidase activity of PXDN through its interaction. Endonuclease selectively degrading some target mRNAs while they are engaged by translating ribosomes, among which albumin and beta-globin mRNAs. In Homo sapiens (Human), this protein is Probable oxidoreductase PXDNL.